Consider the following 622-residue polypeptide: Apical membrane antigen 1 (622 aa).

A signal peptide spans 1–24; it reads MRKLYCVLLLSAFEFTYMINFGRG. Over 25–546 the chain is Extracellular; it reads QNYWEHPYQN…EHKPTYDNMK (522 aa). 5 cysteine pairs are disulfide-bonded: C149-C302, C217-C247, C263-C275, C320-C418, and C337-C409. N162 carries an N-linked (GlcNAc...) asparagine glycan. 5 N-linked (GlcNAc...) asparagine glycosylation sites follow: N286, N371, N421, N422, and N499. 3 cysteine pairs are disulfide-bonded: C443-C502, C490-C507, and C492-C509. The helical transmembrane segment at 547–567 threads the bilayer; the sequence is IIIASSAAVAVLATILMVYLY. The Cytoplasmic segment spans residues 568 to 622; it reads KRKGNAEKYDKMDQPQDYGKSTSRNDEMLDPEASFWGEEKRASHTTPVLMEKPYY. The disordered stretch occupies residues 577-607; that stretch reads DKMDQPQDYGKSTSRNDEMLDPEASFWGEEK.

It belongs to the apicomplexan parasites AMA1 family.

It is found in the membrane. Functionally, involved in parasite invasion of erythrocytes. This Plasmodium falciparum (isolate Camp / Malaysia) protein is Apical membrane antigen 1 (AMA-1).